We begin with the raw amino-acid sequence, 329 residues long: Vomeronasal type-1 receptor 42 (329 aa).

At 1–32 the chain is on the extracellular side; it reads MGDILFSSPQSMFSHTMNKNSILHTHSIIGKT. A helical membrane pass occupies residues 33 to 53; it reads FFSEIGIGISGNSFLLLVHIL. Topologically, residues 54–65 are cytoplasmic; it reads KFIRGHRPRLTD. The helical transmembrane segment at 66–86 threads the bilayer; it reads LPIGLLSLIHLLMLLVAAFIA. Residues 87 to 109 lie on the Extracellular side of the membrane; it reads TDIFISRRGWDDIICKFLVYLYR. A disulfide bond links cysteine 101 and cysteine 188. The helical transmembrane segment at 110–130 threads the bilayer; it reads VLRGFSLCTTSMLSILQAIIL. Residues 131–150 are Cytoplasmic-facing; it reads SPRSSCLAKFKHISPHHISG. Residues 151 to 171 traverse the membrane as a helical segment; the sequence is AILFLSVLYMLIGSQLLVSII. Over 172–209 the chain is Extracellular; it reads ATPNLTMNDFIYVTQSCSILPLSYLMQSIYSTLLAIRE. The N-linked (GlcNAc...) asparagine glycan is linked to asparagine 175. A helical transmembrane segment spans residues 210–230; sequence FFLISLMVLSNWYMVALLSMH. Residues 231–254 are Cytoplasmic-facing; that stretch reads RKQTQHLHGTNLSPKKSPEQSATQ. The helical transmembrane segment at 255 to 275 threads the bilayer; it reads TILMLISFFLLMTIYDTIVSC. Residues 276-285 are Extracellular-facing; it reads SRTMFLNDPT. Residues 286 to 306 form a helical membrane-spanning segment; sequence SYSIELFIMHIYATVSPFVFM. The Cytoplasmic portion of the chain corresponds to 307 to 329; it reads STEKHIVNFLRSLGKRVINFNLH.

The protein belongs to the G-protein coupled receptor 1 family.

It is found in the cell membrane. Functionally, putative pheromone receptor implicated in the regulation of social and reproductive behavior. This is Vomeronasal type-1 receptor 42 (Vmn1r42) from Mus musculus (Mouse).